Reading from the N-terminus, the 400-residue chain is Deoxyguanosinetriphosphate triphosphohydrolase-like protein (400 aa).

In terms of domain architecture, HD spans 73–215; sequence RLTHSIEVSQ…AAIADDIAYN (143 aa).

It belongs to the dGTPase family. Type 2 subfamily.

This chain is Deoxyguanosinetriphosphate triphosphohydrolase-like protein, found in Bartonella henselae (strain ATCC 49882 / DSM 28221 / CCUG 30454 / Houston 1) (Rochalimaea henselae).